The primary structure comprises 173 residues: T-cell receptor beta-2 chain C region (173 aa).

Positions 1–146 are c region; the sequence is EDLRNVTPPK…GVLSATILYE (146 aa). Asn67 and Asn116 each carry an N-linked (GlcNAc...) asparagine glycan. A helical membrane pass occupies residues 147 to 168; that stretch reads ILLGKATLYAVLVSGLVLMAMV. Topologically, residues 169–173 are cytoplasmic; it reads KKKNS.

Its subcellular location is the membrane. This chain is T-cell receptor beta-2 chain C region, found in Mus musculus (Mouse).